Here is a 203-residue protein sequence, read N- to C-terminus: MKDLTDKQQAVLAFITTIIKERGFPPTIREIGDEFGITAKGAYDHLKAIEKKGYLKTAKNQSRAIELIRQSPMESIPVQATSIPVIGRVAAGLPIFADENIESYIPVPDEMAKGNVPMYALRVQGDSMIEVGIDSGDIAIIEKRDIARNGEIVVALIEDEATLKVYYKEQDQIRLEARNPKYKPIKTKKATVIGKLVGLYRIY.

Residues 28-47 (IREIGDEFGITAKGAYDHLK) constitute a DNA-binding region (H-T-H motif). Active-site for autocatalytic cleavage activity residues include Ser-127 and Lys-164.

Belongs to the peptidase S24 family. Homodimer.

The enzyme catalyses Hydrolysis of Ala-|-Gly bond in repressor LexA.. In terms of biological role, represses a number of genes involved in the response to DNA damage (SOS response), including recA and lexA. In the presence of single-stranded DNA, RecA interacts with LexA causing an autocatalytic cleavage which disrupts the DNA-binding part of LexA, leading to derepression of the SOS regulon and eventually DNA repair. The protein is LexA repressor of Leptospira borgpetersenii serovar Hardjo-bovis (strain JB197).